The sequence spans 362 residues: Molybdenum import ATP-binding protein ModC (362 aa).

One can recognise an ABC transporter domain in the interval 4–238; it reads AGEAAIRARF…LDLPIRLGED (235 aa). Residue 38-45 participates in ATP binding; it reads GHSGSGKT. One can recognise a Mop domain in the interval 297 to 362; sequence GTSILNTLPA…AQIKAVALVG (66 aa).

The protein belongs to the ABC transporter superfamily. Molybdate importer (TC 3.A.1.8) family. In terms of assembly, the complex is composed of two ATP-binding proteins (ModC), two transmembrane proteins (ModB) and a solute-binding protein (ModA).

The protein resides in the cell inner membrane. The enzyme catalyses molybdate(out) + ATP + H2O = molybdate(in) + ADP + phosphate + H(+). Functionally, part of the ABC transporter complex ModABC involved in molybdenum import. Responsible for energy coupling to the transport system. The polypeptide is Molybdenum import ATP-binding protein ModC (Thiobacillus denitrificans (strain ATCC 25259 / T1)).